A 24-amino-acid polypeptide reads, in one-letter code: Unknown protein 6 (24 aa).

This is Unknown protein 6 from Lonomia obliqua (Moth).